A 1260-amino-acid polypeptide reads, in one-letter code: MASACGAPGPGAGPGAALGSPAPAWYHRDLSRAAAEELLARAGRDGSFLVRDSESVAGAFALCVLYQKHVHTYRILPDGEDFLAVQTSQGVPVRRFQTLGELIGLYAQPNQGLVCALLLPVERERELDPPDERDASDGEDEKPPLPPRSGTSVSAPLGPSSPPAAPEPPTPAVESAPNGLSTVSHEYLKGSYGLDLEAVRGGASNLPHLTRTLAASCRRLHSEVDKVLSGLEILSKVFDQQSSPMVTRLLQQQNPPQTGEQELESLVLKLSVLKDFLSGIQKKALKALQDMSSTAPPAPVQPSTRKAKTIPVQAFEVKLDVTLGDLTKIGKSQKFTLSVDVEGGRLVLLRRQRDSQEDWTTFTHDRIRQLIKSQRVQNKLGVVFEKEKERTQRKDFIFVSARKREAFCQLLQLMKNKHSKQDEPDMISVFIGTWNMGSVPPPRNVTSWFTSKGLGKTLDEVTVTIPHDIYVFGTQENSVGDREWLDLLRGGLKELTDLDYRPIAMQSLWNIKVAVLVKPEHENRISHVSTSSVKTGIANTLGNKGAVGVSFMFNGTSFGFVNCHLTSGNEKTARRNQNYLDILRLLSLGDRQLGAFDISLRFTHLFWFGDLNYRLDMDIQEILNYISRKEFEPLLRVDQLNLEREKHKVFLRFSEEEISFPPTYRYERGSRDTYAWHKQKPTGVRTNVPSWCDRILWKSHPETHIICNSYGCTDDIVTSDHSPVFGTFEVGVTSQFISKKGLSKTADQAYIEFESIEAIVKTASRTKFFIEFYSTCLEEYKKSFENDAQSSDNVNFLKVQWSSRQLPTLKPILDIEYLQDQHLLLTVKSMDGYESYGECVVALKSMIGSTAQQFLTFLSHRGEETGNIRGSMKVRVPTERLGTRERLYEWISIDKDEAGAKSKAPSVSRGSQEPRSGSRKPAPAEASCPLSKLFEEPEKPPPTGRPPAPPRAAPREEPLTPRLKPEGAPEPEGVAAPPPKNSFNNPAYYVLEGVPHQLLPPEPPSPARAPVPPATKNKVAITVPAPQLGRHRPPRVGEGSSSDEESGGTLPPPDFPPPPLPDSAIFLPPSREPLPGPGVRGRSGGEARALPPPKAHPRPPLPPGPLPPGTFLGEAAGGDDRSCSVLQVAKKLSEVDSAPPGPGRCLLLPGPLELQPARALPSDYGRPLSFPPPRIRESVQEDLAEEAPCPQAGRTGGLGEAGMGAWLRAIGLERYEEGLVHNGWDDLEFLSDITEEDLEEAGVQDPAHKRLLLDTLQLSK.

One can recognise an SH2 domain in the interval 25–121 (WYHRDLSRAA…GLVCALLLPV (97 aa)). Over residues 126–136 (ELDPPDERDAS) the composition is skewed to basic and acidic residues. The disordered stretch occupies residues 126–178 (ELDPPDERDASDGEDEKPPLPPRSGTSVSAPLGPSSPPAAPEPPTPAVESAPN). Ser136 is modified (phosphoserine). The segment covering 159–171 (PSSPPAAPEPPTP) has biased composition (pro residues). A phosphoserine mark is found at Ser243 and Ser355. The residue at position 888 (Tyr888) is a Phosphotyrosine. At Ser892 the chain carries Phosphoserine. Positions 899–1120 (GAKSKAPSVS…FLGEAAGGDD (222 aa)) are disordered. A compositionally biased stretch (pro residues) spans 940–952 (PPPTGRPPAPPRA). The short motif at 946 to 951 (PPAPPR) is the SH3-binding element. Over residues 953-967 (APREEPLTPRLKPEG) the composition is skewed to basic and acidic residues. Thr960 is subject to Phosphothreonine. Residues 985 to 988 (NPAY) carry the NPXY motif motif. At Tyr988 the chain carries Phosphotyrosine. Composition is skewed to pro residues over residues 998-1013 (LLPPEPPSPARAPVPP), 1050-1061 (LPPPDFPPPPLP), and 1090-1108 (LPPPKAHPRPPLPPGPLPP). Position 1133 is a phosphoserine (Ser1133). Tyr1164 bears the Phosphotyrosine mark. The interval 1181–1200 (EDLAEEAPCPQAGRTGGLGE) is disordered. In terms of domain architecture, SAM spans 1198-1260 (LGEAGMGAWL…LLLDTLQLSK (63 aa)). Ser1259 is subject to Phosphoserine.

The protein belongs to the inositol 1,4,5-trisphosphate 5-phosphatase family. Interacts with tyrosine phosphorylated form of SHC1. Interacts with EGFR. Upon stimulation by the EGF signaling pathway, it forms a complex with SHC1 and EGFR. Interacts with cytoskeletal protein SORBS3/vinexin, promoting its localization to the periphery of cells. Forms a complex with filamin (FLNA or FLNB), actin, GPIb (GP1BA or GP1BB) that regulates cortical and submembraneous actin. Interacts with c-Met/MET, when c-Met/MET is phosphorylated on 'Tyr-1356'. Interacts with p130Cas/BCAR1. Interacts with CENTD3/ARAP3 via its SAM domain. Interacts with c-Cbl/CBL and CAP/SORBS1. Interacts with activated EPHA2 receptor. Interacts with receptor FCGR2A. Interacts with receptor FCGR2B. Interacts with tyrosine kinase ABL1. Interacts with tyrosine kinase TEC. Interacts with CSF1R. Interacts (via N-terminus) with SH3YL1 (via SH3 domain). Interacts with FCRL6 (tyrosine phosphorylated form). Interacts (via SH2 domain) with tyrosine phosphorylated KLRC1 (via ITIM). Interacts with NEDD9/HEF1. Tyrosine phosphorylated by the members of the SRC family after exposure to a diverse array of extracellular stimuli such as insulin, growth factors such as EGF or PDGF, chemokines, integrin ligands and hypertonic and oxidative stress. May be phosphorylated upon IgG receptor FCGR2B-binding. Phosphorylated at Tyr-988 following cell attachment and spreading. Phosphorylated at Tyr-1164 following EGF signaling pathway stimulation. As to expression, expressed abundantly in skeletal muscle tissue.

It localises to the cytoplasm. Its subcellular location is the cytosol. The protein resides in the cytoskeleton. The protein localises to the membrane. It is found in the cell projection. It localises to the filopodium. Its subcellular location is the lamellipodium. The protein resides in the basal cell membrane. The protein localises to the nucleus. It is found in the nucleus speckle. It localises to the spindle pole. The enzyme catalyses a 1,2-diacyl-sn-glycero-3-phospho-(1D-myo-inositol-3,4,5-trisphosphate) + H2O = a 1,2-diacyl-sn-glycero-3-phospho-(1D-myo-inositol-3,4-bisphosphate) + phosphate. It catalyses the reaction 1,2-dioctanoyl-sn-glycero-3-phospho-(1D-myo-inositol-3,4,5-trisphosphate) + H2O = 1,2-dioctanoyl-sn-glycero-3-phospho-(1D-myo-inositol-3,4-bisphosphate) + phosphate. It carries out the reaction 1,2-dihexadecanoyl-sn-glycero-3-phospho-(1D-myo-inositol-3,4,5-trisphosphate) + H2O = 1,2-dihexadecanoyl-sn-glycero-3-phospho-(1D-myo-inositol-3,4-bisphosphate) + phosphate. Activated upon translocation to the sites of synthesis of PtdIns(3,4,5)P3 in the membrane. Enzymatic activity is enhanced in the presence of phosphatidylserine. In terms of biological role, phosphatidylinositol (PtdIns) phosphatase that specifically hydrolyzes the 5-phosphate of phosphatidylinositol-3,4,5-trisphosphate (PtdIns(3,4,5)P3) to produce PtdIns(3,4)P2, thereby negatively regulating the PI3K (phosphoinositide 3-kinase) pathways. Required for correct mitotic spindle orientation and therefore progression of mitosis. Plays a central role in regulation of PI3K-dependent insulin signaling, although the precise molecular mechanisms and signaling pathways remain unclear. While overexpression reduces both insulin-stimulated MAP kinase and Akt activation, its absence does not affect insulin signaling or GLUT4 trafficking. Confers resistance to dietary obesity. May act by regulating AKT2, but not AKT1, phosphorylation at the plasma membrane. Part of a signaling pathway that regulates actin cytoskeleton remodeling. Required for the maintenance and dynamic remodeling of actin structures as well as in endocytosis, having a major impact on ligand-induced EGFR internalization and degradation. Participates in regulation of cortical and submembraneous actin by hydrolyzing PtdIns(3,4,5)P3 thereby regulating membrane ruffling. Regulates cell adhesion and cell spreading. Required for HGF-mediated lamellipodium formation, cell scattering and spreading. Acts as a negative regulator of EPHA2 receptor endocytosis by inhibiting via PI3K-dependent Rac1 activation. Acts as a regulator of neuritogenesis by regulating PtdIns(3,4,5)P3 level and is required to form an initial protrusive pattern, and later, maintain proper neurite outgrowth. Acts as a negative regulator of the FC-gamma-RIIA receptor (FCGR2A). Mediates signaling from the FC-gamma-RIIB receptor (FCGR2B), playing a central role in terminating signal transduction from activating immune/hematopoietic cell receptor systems. Involved in EGF signaling pathway. Upon stimulation by EGF, it is recruited by EGFR and dephosphorylates PtdIns(3,4,5)P3. Plays a negative role in regulating the PI3K-PKB pathway, possibly by inhibiting PKB activity. Down-regulates Fc-gamma-R-mediated phagocytosis in macrophages independently of INPP5D/SHIP1. In macrophages, down-regulates NF-kappa-B-dependent gene transcription by regulating macrophage colony-stimulating factor (M-CSF)-induced signaling. Plays a role in the localization of AURKA and NEDD9/HEF1 to the basolateral membrane at interphase in polarized cysts, thereby mediates cell cycle homeostasis, cell polarization and cilia assembly. Additionally promotion of cilia growth is also facilitated by hydrolysis of (PtdIns(3,4,5)P3) to PtdIns(3,4)P2. Promotes formation of apical membrane-initiation sites during the initial stages of lumen formation via Rho family-induced actin filament organization and CTNNB1 localization to cell-cell contacts. May also hydrolyze PtdIns(1,3,4,5)P4, and could thus affect the levels of the higher inositol polyphosphates like InsP6. Involved in endochondral ossification. The chain is Phosphatidylinositol 3,4,5-trisphosphate 5-phosphatase 2 from Sus scrofa (Pig).